A 115-amino-acid polypeptide reads, in one-letter code: Ribonuclease P protein component (115 aa).

This sequence belongs to the RnpA family. As to quaternary structure, consists of a catalytic RNA component (M1 or rnpB) and a protein subunit.

The catalysed reaction is Endonucleolytic cleavage of RNA, removing 5'-extranucleotides from tRNA precursor.. Its function is as follows. RNaseP catalyzes the removal of the 5'-leader sequence from pre-tRNA to produce the mature 5'-terminus. It can also cleave other RNA substrates such as 4.5S RNA. The protein component plays an auxiliary but essential role in vivo by binding to the 5'-leader sequence and broadening the substrate specificity of the ribozyme. The protein is Ribonuclease P protein component of Bacillus cereus (strain Q1).